Consider the following 89-residue polypeptide: Phasin PhaP (89 aa).

2 helix regions span residues 3–26 (TQFFEEYQTQLLDWQKKFFSTWME) and 39–83 (DTFE…ALRQ).

In terms of assembly, homotetramer.

It localises to the cellular thylakoid membrane. The protein localises to the cytoplasm. Its pathway is biopolymer metabolism; poly-(R)-3-hydroxybutanoate biosynthesis. In terms of biological role, a phasin, it attaches to the polyhydroxybutyrate (PHB) granule surface regulating the number and size of PHB granules within a cell. It probably also acts as a regulator affecting the biosynthetic activity of PHB synthase in vivo. The protein is Phasin PhaP of Synechocystis sp. (strain ATCC 27184 / PCC 6803 / Kazusa).